The chain runs to 2641 residues: Inverse autotransporter adhesin YeeJ (2641 aa).

An N-terminal signal peptide occupies residues 1 to 25 (MGIKLRRLTAGICLITQLVFPMAAA). A LysM domain is found at 50 to 98 (VPYTLGALESAQSVAERFGISVAELRKLNQFRTFARGFDNVRQGDELDV). Positions 125 to 400 (TSQQIGSLLA…SRFDLVDRNN (276 aa)) are inverse autotransporter. Residues 513 to 605 (QKDSSVSLSS…GVDAAKAPAV (93 aa)) are invasin 3 domain. Big-1 domains follow at residues 617–711 (HSSI…AGFI), 721–815 (IATL…VSFV), 822–913 (QVDL…VIFI), 920–1017 (ALTL…MTFV), 1024–1116 (VVVL…VNIA), 1123–1220 (QVTL…VTFV), 1227–1319 (VVVL…VNIA), 1326–1423 (QVTL…VTFV), 1430–1523 (LVVL…VHFI), 1531–1633 (IIEL…SINV), 1641–1734 (HLTL…VTYV), 1741–1837 (EISL…VNFI), 1844–1941 (QVNL…VTLI), 1948–2032 (KLAS…PTEV), 2048–2141 (ITSL…VIDQ), 2142–2235 (KLTL…IVKV), and 2244–2336 (VASF…ITLV). Residues 2538–2641 (KSWWVNAGDA…FAYATCYKNL (104 aa)) form a C-type lectin domain region.

This sequence belongs to the intimin/invasin family.

It localises to the cell outer membrane. In terms of biological role, a probable inverse autotransporter, it may be involved in biofilm formation and cell adhesion. May bind peptidoglycan via its LysM domain. The chain is Inverse autotransporter adhesin YeeJ (yeeJ) from Escherichia coli O157:H7.